Here is a 267-residue protein sequence, read N- to C-terminus: Trehalose 2-sulfotransferase (267 aa).

Alpha,alpha-trehalose is bound by residues glutamine 14, 33-39, proline 48, and tryptophan 53; that span reads EPQEFFQ. The active-site Proton acceptor is glutamate 36.

This sequence belongs to the Stf0 sulfotransferase family. Homodimer.

The catalysed reaction is alpha,alpha-trehalose + 3'-phosphoadenylyl sulfate = 2-O-sulfo-alpha,alpha-trehalose + adenosine 3',5'-bisphosphate + H(+). It participates in glycolipid metabolism. In terms of biological role, catalyzes the sulfuryl group transfer from 3'-phosphoadenosine-5'-phosphosulfate (PAPS) to trehalose, leading to trehalose-2-sulfate (T2S). The sulfation of trehalose is the first step in the biosynthesis of sulfolipid-1 (SL-1), a major cell wall glycolipid and the most abundant sulfated metabolite found in Mycobacterium tuberculosis, that is a potential virulence factor thought to mediate host-pathogen interactions. This Mycobacterium tuberculosis (strain ATCC 35801 / TMC 107 / Erdman) protein is Trehalose 2-sulfotransferase.